Reading from the N-terminus, the 276-residue chain is Acyl-[acyl-carrier-protein]--UDP-N-acetylglucosamine O-acyltransferase (276 aa).

Belongs to the transferase hexapeptide repeat family. LpxA subfamily. As to quaternary structure, homotrimer.

It is found in the cytoplasm. It carries out the reaction a (3R)-hydroxyacyl-[ACP] + UDP-N-acetyl-alpha-D-glucosamine = a UDP-3-O-[(3R)-3-hydroxyacyl]-N-acetyl-alpha-D-glucosamine + holo-[ACP]. Its pathway is glycolipid biosynthesis; lipid IV(A) biosynthesis; lipid IV(A) from (3R)-3-hydroxytetradecanoyl-[acyl-carrier-protein] and UDP-N-acetyl-alpha-D-glucosamine: step 1/6. Involved in the biosynthesis of lipid A, a phosphorylated glycolipid that anchors the lipopolysaccharide to the outer membrane of the cell. The polypeptide is Acyl-[acyl-carrier-protein]--UDP-N-acetylglucosamine O-acyltransferase (Gloeothece citriformis (strain PCC 7424) (Cyanothece sp. (strain PCC 7424))).